Consider the following 172-residue polypeptide: MSDEITNGAAKPTEAISGPTFTIEKIYIKDVSFEAPNSPAVFNEAGQPELQLNLNQRVQRLNENAFELVLHVTLTCTAAGKTAYVVEVQQAGVFGLFGLDQHAIGVLLGTQCPNILFPYVRSLVSDLIQIGGFPPFYLQPINFDALYAETLRQRAQNEKEGSQISSQPAGNA.

It belongs to the SecB family. In terms of assembly, homotetramer, a dimer of dimers. One homotetramer interacts with 1 SecA dimer.

The protein localises to the cytoplasm. One of the proteins required for the normal export of preproteins out of the cell cytoplasm. It is a molecular chaperone that binds to a subset of precursor proteins, maintaining them in a translocation-competent state. It also specifically binds to its receptor SecA. The polypeptide is Protein-export protein SecB (Xylella fastidiosa (strain Temecula1 / ATCC 700964)).